Consider the following 1698-residue polypeptide: MSLPLKPLTIDSNNKQLDSKQKKFRANVERALERFDSVTEWADYIASLGTLLKALQSWSPKFQNVRYYVPSPYQVSRRLTSSLSPALPAGVHQKTLEVYTYIFEHIGLETLATECNIWIPGILPLMTYASMSVRSHLIELYDNYILLLPQTTLRLLIRPLISSLLPGIDDESNDFLPLTLKLIETLQENLDDDSLFWQTLFLVMTANKGRRLGGLTWLTRKFPSLNAVPHLVNKIKMEAEENPSETETNDSHLDRKKRKEEAFKVLLPAAKDLVTPEPGLLIRCLVGCLEDENDILIKRSVLDLLLQRLRLDSPVLNVLITSEDKKLLIMSCCRTTLSKDMSLNRRIWNWLLGPTAGGMLNNNGGNSMEYTTSVKSANEESNVYFTKYGLSALLEGLSDLLSEEESVLTAFRISMAVMDRWEIGSLVIPELFIPLLYSSEKFKQNEQIMKTARTFFDNTETNIIWGKLFQELEDIKNLKILDFVLTNFNIGNDEEIIVRHLPLILLTLLALPSNDKDFDNIYKLQKFSLYNKLLNYIPERALLPLSHSKLKHDDEVSCEELLAKIRGFYTNVSNPSSILEKENIAERLPPFTTEDLTFLIADLIQKKLLSSLWDLENINESSKLFIAIFEKIPESEELKGRSHISWSDKKITQSIFEAIPRLCESNNDAKSEEIVGIVEIFGNYLYSRMEFIESMKLLKVVMMAVWKSLKDPRHQILGVKNLKTLNRFIPSKFIESALVYTFVEEEDISERLSVLDLLWTQLDSDSNLIRRPLELILGELFDDQNPFYLTVSKWILSILNSGSASRLFYILTDNILKVNRLEKERLDERDDLDMLTYEFQMLAYVLKTNNGRTRKVFSTELTSIKSSTIWKNEDVSTYKSLLLVTLMRFLNIKSNTHAKSIRSALILLDILLDGTEQNFKDIVIFLLQMSSKYIAEEGIEPELIAVSLLDIVSKVLRLSHDNGIKLDIFDDNAAHLKYIDFLVTSVSNMKSPLIVTAYVKLLSESIVYFENSIFRMILPLSASLVQCVQRLFLLEKREGGYYQPIALLLGGLEELLEISHGYLVTEEREGYFSGSNLKGDFIQSVVSNVFSSDSSNEESKIQGERDVILQSFRQVISCCLDIWYWAHNISCKSNDDSSLDATNHNSYKFKFRSKKLLETLFLLEPLELLENLISIRSDNTTVTLVHVLDGNKPAITIPHLLYGVIIRYNRTASVKFSNRDGSRSSTTKLTKGEPSMLKRLSGESIIAFLFNYVDSVENSAMEEFYGDFLLFFREVATNYNLYSDVSLSILKLVALISGKVSKTQFGEQKRVRREISDVFFKYLPNAFINFTNLYRGHPDSFKDLEFVVWRVQYIVNDQIGGDKFNTTLATIVNQCLTPYIKPKSEKTIPGYVLELAAVVSHLGSKVKSWRLLIAELFQNDKKLSVIGSDQTWEKIIYEWSIYPENKSKILNDLLLEIGSKRSSVTPTLITFNLGSDSEVEYKCQNLLKISYLLMVSPNDAYLLHFSSLISCIFHYLVSKDIKLKGSCWILLRVLLLRFSESHFNDYWSMISYCLQTNLQEFYESLQIQSEVDPQTILQVCKTLDLLLLLNMEGFTSTNEWIFVIDTINCVYKTNSFVALVDEIAEFKDYEITKTDDLELPTTLKDGLPLLRGIHKIERHTQLRSFFQNLSYLHYEKVYGLGSVDLYGCGEDLKKDILS.

Serine 244 is modified (phosphoserine).

Belongs to the DOP1 family. In terms of assembly, interacts with MON2.

It is found in the golgi apparatus membrane. Its function is as follows. Required for traffic between late Golgi and early endosomes, and for the normal structure and organization of the endoplasmic reticulum. Required for normal cellular morphogenesis. The polypeptide is Protein DOP1 (DOP1) (Saccharomyces cerevisiae (strain ATCC 204508 / S288c) (Baker's yeast)).